The sequence spans 233 residues: Superoxide dismutase [Mn] 3.4, mitochondrial (233 aa).

A mitochondrion-targeting transit peptide spans 1–29; sequence MALRTLASKNALSFALGGAARPSAASARG. Residues His57, His105, Asp194, and His198 each coordinate Mn(2+).

It belongs to the iron/manganese superoxide dismutase family. In terms of assembly, homotetramer. Mn(2+) is required as a cofactor.

The protein localises to the mitochondrion matrix. The enzyme catalyses 2 superoxide + 2 H(+) = H2O2 + O2. In terms of biological role, destroys superoxide anion radicals which are normally produced within the cells and which are toxic to biological systems. This Zea mays (Maize) protein is Superoxide dismutase [Mn] 3.4, mitochondrial (SODA.3).